We begin with the raw amino-acid sequence, 241 residues long: MPRILIIDDDPAISDLVSINLEMAGYDVQQAVDGIKGQALAVQLQPDLIMLDLMLPKVDGFTVCQRLRRDERTADIPVLMLTALGQIQDKIQGFDSGADDYLTKPFDVEEMLARVRALLRRTDRIPQAAKHSEILNQGPLTLVPERFEAIWFGKSIKLTHLEFELLHCLLQRHGQTVSPSDILREVWGYEPDDDIETIRVHIRHLRTKLEPNPRRPRFIKTVYGAGYCLELSTEEGGGSPT.

Positions 3–119 (RILIIDDDPA…EMLARVRALL (117 aa)) constitute a Response regulatory domain. Position 52 is a 4-aspartylphosphate (Asp52). Residues 132 to 231 (SEILNQGPLT…VYGAGYCLEL (100 aa)) constitute a DNA-binding region (ompR/PhoB-type).

Interacts with reduced ferredoxin (petF). Interacts with CikA, RpaB, SasA, Sll0038 (pixG) and a number of other proteins. Post-translationally, phosphorylated by SasA; phosphorylation is maximal when KaiC phosphorylation is active during the circadian cycle. Dephosphorylated by CikA. CikA and SasA cooperation generates RpaA activity oscillation that is distinct from that generated by CikA or SasA alone and offset from the rhythm of KaiC phosphorylation.

It is found in the cytoplasm. In terms of biological role, response regulator of 2 two-component regulatory systems SasA/RpaA and CikA/RpaA involved in genome-wide circadian gene expression. The histidine kinases have opposing effects modulated by the clock oscillator proteins; SasA phosphorylates RpaA (stimulated by fully phosphorylated KaiC1) while CikA dephosphorylates phospho-RpaA (stimulated by the phospho-Ser-432-KaiC1-KaiB complex). The RpaA regulon is about 300 genes, and includes itself, cikA, sigE, sigG, genes involved in photosynthesis, carbon metabolism in the light and dark, phototaxis, CRISPR arrays 2 and 3 as well as nearly 90 ncRNAs. Genes are up- or down-regulated in its absence. Involved in regulation of primary sugar and amino acid metabolism and in adaptation to light changes. Regulates the accumulation of the monomeric photosystem I and the D1 protein under high light conditions. Overexpression causes cells to grow more slowly, increases levels of transcripts for clock oscillator genes in the light and the dark, increases levels of SigE protein, increases accumulation of sugar catabolic enzymes in the dark with concomitant decreases in most sugar metabolites. Plays a role in cell division; overexpression from the psbAII promoter increases expression of some cell-division-related genes, alters cell volume and changes the outer cell membrane and cell wall appearance. This is DNA-binding dual master transcriptional regulator RpaA from Synechocystis sp. (strain ATCC 27184 / PCC 6803 / Kazusa).